Reading from the N-terminus, the 360-residue chain is MVQKLSRRLFLSIGTAFTVVVGSQLLSSCGQSPDAPIADTPGEQQEINLYSSRHYNTDNELYAKFTAETGIKVNLIEGKADELLERIKSEGANSPADVLLTVDLARLWRAEEDGIFQPVQSEILETNVPEYLRSPDGMWFGFTKRARVIMYNKGKVKPEELSTYEELADPKWKGRVIIRSSSNEYNQSLVASLVVADGEESTLAWAKGFVSNFAREPQGNDTAQIEAVSSGEADLTLANTYYMGRLLESEDPAQKAIAENVGVFFPNQEGRGTHVNVSGVGVVKTAPNREGAVKFIEFLVSEPAQAFLAQNNYEYPVLAGVPLNKSVASFGEFKSDTTSLDKLGPALAPATKIMNEAGWK.

Residues 1–28 (MVQKLSRRLFLSIGTAFTVVVGSQLLSS) form the signal peptide. Cys-29 carries N-palmitoyl cysteine lipidation. Cys-29 is lipidated: S-diacylglycerol cysteine. 5 residues coordinate Fe cation: His-54, Tyr-55, Tyr-185, Tyr-241, and Tyr-242.

Belongs to the bacterial solute-binding protein 1 family.

It localises to the cellular thylakoid membrane. The protein resides in the cell membrane. Its function is as follows. Plays an important role in protecting the acceptor side of photosystem II (PSII) against oxidative damage, especially under iron-limiting growth conditions. The differing subcellular locations of futA1 (predominantly thylakoid lumen) and futA2 (predominantly periplasmic) suggest they may fulfill different roles. Functionally, a major iron-binding protein involved in Fe(3+) uptake, probably part of a periplasmic ABC transporter complex futA1A2BC (TC 3.A.1.10.2) involved in Fe(3+) ion import (ferric iron). This protein and futA2 (slr0531) may be subunit proteins that have redundant or overlapping substrate-binding functions. The polypeptide is Iron uptake protein A1 (futA1) (Synechocystis sp. (strain ATCC 27184 / PCC 6803 / Kazusa)).